The primary structure comprises 216 residues: UPF0134 protein MPN_344 (216 aa).

Over residues 47–62 the composition is skewed to basic and acidic residues; it reads FTIIEDQQDRPDKPEE. 2 disordered regions span residues 47–104 and 194–216; these read FTII…PKPD and GKMD…LESK. Pro residues predominate over residues 68 to 78; the sequence is IPKPPKPPKGP. Residues 83–93 show a composition bias toward low complexity; it reads EPGQPGGPDDP.

The protein belongs to the UPF0134 family.

This Mycoplasma pneumoniae (strain ATCC 29342 / M129 / Subtype 1) (Mycoplasmoides pneumoniae) protein is UPF0134 protein MPN_344.